The chain runs to 452 residues: UDP-N-acetylmuramoylalanine--D-glutamate ligase (452 aa).

An ATP-binding site is contributed by 119 to 125 (GSNGKTT).

Belongs to the MurCDEF family.

Its subcellular location is the cytoplasm. It carries out the reaction UDP-N-acetyl-alpha-D-muramoyl-L-alanine + D-glutamate + ATP = UDP-N-acetyl-alpha-D-muramoyl-L-alanyl-D-glutamate + ADP + phosphate + H(+). It participates in cell wall biogenesis; peptidoglycan biosynthesis. In terms of biological role, cell wall formation. Catalyzes the addition of glutamate to the nucleotide precursor UDP-N-acetylmuramoyl-L-alanine (UMA). In Streptococcus equi subsp. zooepidemicus (strain MGCS10565), this protein is UDP-N-acetylmuramoylalanine--D-glutamate ligase.